Reading from the N-terminus, the 418-residue chain is Histidine--tRNA ligase (418 aa).

The protein belongs to the class-II aminoacyl-tRNA synthetase family.

It localises to the cytoplasm. It catalyses the reaction tRNA(His) + L-histidine + ATP = L-histidyl-tRNA(His) + AMP + diphosphate + H(+). The polypeptide is Histidine--tRNA ligase (Methanococcus maripaludis (strain C6 / ATCC BAA-1332)).